We begin with the raw amino-acid sequence, 420 residues long: Tryptophan--tRNA ligase (420 aa).

Positions 72–80 (PSGLPHFGH) match the 'HIGH' region motif. The 'KMSKS' region motif lies at 308 to 312 (KMSSS).

This sequence belongs to the class-I aminoacyl-tRNA synthetase family.

The protein resides in the cytoplasm. It carries out the reaction tRNA(Trp) + L-tryptophan + ATP = L-tryptophyl-tRNA(Trp) + AMP + diphosphate + H(+). The chain is Tryptophan--tRNA ligase from Archaeoglobus fulgidus (strain ATCC 49558 / DSM 4304 / JCM 9628 / NBRC 100126 / VC-16).